Reading from the N-terminus, the 485-residue chain is Glycogen synthase (485 aa).

Position 15 (Lys-15) interacts with ADP-alpha-D-glucose.

The protein belongs to the glycosyltransferase 1 family. Bacterial/plant glycogen synthase subfamily.

The enzyme catalyses [(1-&gt;4)-alpha-D-glucosyl](n) + ADP-alpha-D-glucose = [(1-&gt;4)-alpha-D-glucosyl](n+1) + ADP + H(+). Its pathway is glycan biosynthesis; glycogen biosynthesis. Its function is as follows. Synthesizes alpha-1,4-glucan chains using ADP-glucose. The polypeptide is Glycogen synthase (glgA) (Geobacillus stearothermophilus (Bacillus stearothermophilus)).